Consider the following 461-residue polypeptide: Transforming growth factor beta-1-induced transcript 1 protein (461 aa).

Met-1 carries the post-translational modification N-acetylmethionine. Positions 1–86 (MEDLDALLSD…PPFSSSSGVL (86 aa)) are disordered. The transcription activation stretch occupies residues 1-200 (MEDLDALLSD…GCPSPPGQTN (200 aa)). The segment at 1–240 (MEDLDALLSD…CNKPIAGQVV (240 aa)) is interaction with PTK2B/PYK2. Residues 3-15 (DLDALLSDLETTT) carry the LD motif 1 motif. Thr-33 bears the Phosphothreonine mark. Tyr-38 bears the Phosphotyrosine mark. Residues 41–52 (QPQTGSGESSGA) are compositionally biased toward polar residues. Tyr-60 carries the phosphotyrosine; by FAK2 and FYN modification. A Phosphoserine modification is found at Ser-68. The segment covering 69–83 (PKSVAPVAPPFSSSS) has biased composition (low complexity). Positions 83 to 136 (SGVLGNGLCELDRLLQELNATQFNITDEIMSQFPSSKMAEGEGKEDQSEDKSIT) are interaction with PTK2/FAK1. Residues 92 to 104 (ELDRLLQELNATQ) carry the LD motif 2 motif. The segment at 116–154 (PSSKMAEGEGKEDQSEDKSITTVPSSTFPAPSKPSATSA) is disordered. Over residues 121–134 (AEGEGKEDQSEDKS) the composition is skewed to basic and acidic residues. Over residues 135 to 154 (ITTVPSSTFPAPSKPSATSA) the composition is skewed to polar residues. A phosphoserine mark is found at Ser-140, Ser-141, Ser-164, and Ser-186. The LD motif 3 signature appears at 157 to 168 (ELDRLMASLSDF). Positions 171-204 (QNHLPASGPPQPPAVSPTREGCPSPPGQTNKGSL) are disordered. At Thr-188 the chain carries Phosphothreonine. Ser-194 carries the post-translational modification Phosphoserine. Residues 203–215 (SLDTMLGLLQSDL) carry the LD motif 4 motif. LIM zinc-binding domains are found at residues 226–285 (GLCG…RFSP), 286–343 (RCGF…QLFA), 344–403 (PRCQ…QRGS), and 404–461 (LCAT…KLFG). Residue Ser-403 is modified to Phosphoserine. At Thr-407 the chain carries Phosphothreonine.

It belongs to the paxillin family. As to quaternary structure, homooligomer. Interacts with PPARG. Interacts with TRAF4. Interacts with CRIP2. Interacts with HSPB1. Interacts with ILK. Interacts with LIMS1 and LIMS2. Interacts with NCK2. Interacts with NUDT16L1. Interacts with PAK. Interacts with PTPN12. Interacts with TCF3. Interacts with TCF7L2. Interacts with VCL. Interacts (via LD motif 3) with GIT1. Also interacts with GIT2. Forms a complex with ARHGEF7. Interacts with AR/androgen receptor in a ligand-dependent manner. Interacts with CSK. Interacts with PTK2/FAK1 and PTK2B/PYK2. Interacts with SLC6A3 and SLC6A4. Interacts with NR3C1. Interacts with SMAD3. Interacts with MAPK15. Interacts with SRC. Interacts with LYN. Interacts with talin. Interacts (via LIM zinc-binding domain 2) with CBLC (via RING-type zinc finger); the interaction is direct and enhances CBLC E3 ubiquitin-protein ligase activity. Interacts with PARVA. Interacts with PXN. In terms of processing, phosphorylated by gonadotropin-releasing hormone-activated SRC. As to expression, strongly expressed in large intestine, lung, spleen, testis, uterus and to a lower extent in brain, kidney and liver (at protein level). In brain, expressed by neuronal and non neuronal cells (at protein level).

It localises to the cell junction. The protein resides in the focal adhesion. It is found in the nucleus matrix. The protein localises to the cytoplasm. Its subcellular location is the cytoskeleton. Functions as a molecular adapter coordinating multiple protein-protein interactions at the focal adhesion complex and in the nucleus. Links various intracellular signaling modules to plasma membrane receptors and regulates the Wnt and TGFB signaling pathways. May also regulate SLC6A3 and SLC6A4 targeting to the plasma membrane hence regulating their activity. In the nucleus, functions as a nuclear receptor coactivator regulating glucocorticoid, androgen, mineralocorticoid and progesterone receptor transcriptional activity. May play a role in the processes of cell growth, proliferation, migration, differentiation and senescence. May have a zinc-dependent DNA-binding activity. The polypeptide is Transforming growth factor beta-1-induced transcript 1 protein (Tgfb1i1) (Rattus norvegicus (Rat)).